The sequence spans 279 residues: Phosphatidylglycerol--prolipoprotein diacylglyceryl transferase (279 aa).

Helical transmembrane passes span 14–34 (IAFSLGSIEVHWYGLAYACAI), 62–82 (YFLWAELGIVLGARIGYILIY), 106–126 (FVGIRGMSYHGGLVGFLIASY), 136–156 (LLIYLDLIAISLPLGYVFGRI), 190–210 (PSQLIEAFLEGVIVFLMVMWA), 218–238 (GLLIVVYGLGYSLMRFIAEFY), and 252–272 (LSMGQILSLFMVIVSLGILLY). An a 1,2-diacyl-sn-glycero-3-phospho-(1'-sn-glycerol)-binding site is contributed by R155.

It belongs to the Lgt family.

It is found in the cell inner membrane. It catalyses the reaction L-cysteinyl-[prolipoprotein] + a 1,2-diacyl-sn-glycero-3-phospho-(1'-sn-glycerol) = an S-1,2-diacyl-sn-glyceryl-L-cysteinyl-[prolipoprotein] + sn-glycerol 1-phosphate + H(+). It functions in the pathway protein modification; lipoprotein biosynthesis (diacylglyceryl transfer). Catalyzes the transfer of the diacylglyceryl group from phosphatidylglycerol to the sulfhydryl group of the N-terminal cysteine of a prolipoprotein, the first step in the formation of mature lipoproteins. The protein is Phosphatidylglycerol--prolipoprotein diacylglyceryl transferase of Helicobacter pylori (strain HPAG1).